Consider the following 991-residue polypeptide: MTPALKEATTKGICFSSLPNTMESDKMLCMESPRTVDEKLKGGDTFSQMLGFPTPEPTLNTNFVNLKHFASPQASKHFQTVLLMSSNSTLNKYNENYNQKKVMESNCSKLKNVLCNGSSIQLSKICPSHSENEFIKKELSDTTSQCMKDIQIVLDSNLTKDANVDRLHLQNCKWYQKNALLDKFTDTKIKKGLLQCTQKKIGPSHSDVPTSSSAAEKEQEVNARLLHCVSKQKILLSQARRTQKHLQMLLAKHVVKHYGQQMKFSMKHQLPTMKIFHEPTTVLSNSLLEHTEIKPEVNILASENKFWDDTNNGFSQCTAAEIQRFALSATGLLSHVEEGLDSDATDSSSDDELDEYTIRKNVAVNSSTEWKWLVDRAQVGSRWTWLQAQISELEYKIQQLTDIHRQIRASKGIVILEECQLPKDILKKQIQFSNQAVSLNTSVNSQVPQRSEEPLPEHDFEMSPSSPTLLLRNIEKQSAQLTEIINSLIAPLNLSPTSSPLSSKSCSHKCLANGISRSASENLDELSSSSSWLLNQKHSKKRRKDRTRLKSPSLAIMSTAARTRPLQSFHKRKLYRLSPTFYWTPETLPSKEAFLSSTQTPYTGSPFSWDNWEQSSRSHLLREQVSKLDSSFHPVLSLPSEIPLHLHFETLFKKTDMKGELAENQFVGDCLISPPPVQGTSSLNQWRNGYSPICKPQIRSQPSVQLLQGRKKRHLSETALAGERTRFEEFAFQRSEPGSHCNFTAVSNANVTSRTQNPSSQNTSRRRLRSESSYDIDNIVIPMSLVAPAKLEKLQYKEILTPRWRKVVLQPLDEHNLNKEEIEDLSDDVFSLRHRKYEEREQARWSLWEQSKWHRRNNRAYSKNVEGQDLVLKEHSSELGSAQQGTAESPFELPAESHSLCAQDSLSLNDGQEDKSLRWERRAFPLKDEDTAALLCQDERKDQTGGTSTAFHDEVFCSTTPESGHPPKMQLDGMEEYKSFGIGVTNVKRNR.

Lys-136 is covalently cross-linked (Glycyl lysine isopeptide (Lys-Gly) (interchain with G-Cter in SUMO2)). A disordered region spans residues 443 to 462; it reads VNSQVPQRSEEPLPEHDFEM. Basic and acidic residues predominate over residues 450–461; that stretch reads RSEEPLPEHDFE. A Phosphoserine modification is found at Ser-463. Over residues 749 to 763 the composition is skewed to polar residues; it reads ANVTSRTQNPSSQNT. The tract at residues 749 to 770 is disordered; the sequence is ANVTSRTQNPSSQNTSRRRLRS. The region spanning 798 to 919 is the PEHE domain; sequence EILTPRWRKV…DGQEDKSLRW (122 aa). The residue at position 863 (Lys-863) is an N6-acetyllysine.

Post-translationally, acetylated on lysine residues by KAT8 upon ionizing radiation-induced DNA damage; deacetylated by HDAC3.

The protein is KAT8 regulatory NSL complex subunit 1-like protein (Kansl1l) of Mus musculus (Mouse).